Reading from the N-terminus, the 578-residue chain is NADPH oxidase 4 (578 aa).

Over 1–16 the chain is Cytoplasmic; sequence MAVSWRSWLANEGVKH. The chain crosses the membrane as a helical span at residues 17-37; it reads LCLLIWLSLNVLLFWKTFLLY. The Extracellular segment spans residues 38-62; sequence NQGPEYYYIHQMLGLGLCLSRASAS. Residues 58-303 enclose the Ferric oxidoreductase domain; sequence RASASVLNLN…YCAERLYRCI (246 aa). A helical transmembrane segment spans residues 63–83; that stretch reads VLNLNCSLILLPMCRTVLAYL. The Cytoplasmic segment spans residues 84–104; it reads RGSQKVPSRRTRRLLDKSKTL. Residues 105–125 traverse the membrane as a helical segment; the sequence is HITCGVTICIFSGVHVAAHLV. Residues 126 to 154 lie on the Extracellular side of the membrane; it reads NALNFSVNYSEDFLELNAARYQNEDPRKL. Asn-133 carries N-linked (GlcNAc...) asparagine glycosylation. Residues 155–175 traverse the membrane as a helical segment; sequence LFTTIPGLTGVCMVVVLFLMV. Topologically, residues 176–188 are cytoplasmic; that stretch reads TASTYAIRVSNYD. Residues 189–209 traverse the membrane as a helical segment; it reads IFWYTHNLFFVFYMLLLLHVS. Residues 210–424 lie on the Extracellular side of the membrane; the sequence is GGLLKYQTNV…SPFEESLNYE (215 aa). Positions 218 to 273 are E-loop; essential for H2O2 generating catalytic activity; it reads NVDTHPPGCISLNQTSSQNMSIPDYVSEHFHGSLPRGFSKLEDRYQKTLVKICLEE. A glycan (N-linked (GlcNAc...) asparagine) is linked at Asn-230. Positions 248 to 575 are mediates interaction with TLR4; that stretch reads HGSLPRGFSK…YGTKFEYNKE (328 aa). In terms of domain architecture, FAD-binding FR-type spans 304–419; that stretch reads RSNKPVTIIS…DGPFGSPFEE (116 aa). Residues 425 to 445 traverse the membrane as a helical segment; sequence VSLCVAGGIGVTPFASILNTL. Residues 446-578 lie on the Cytoplasmic side of the membrane; it reads LDDWKPYKLR…KFEYNKESFS (133 aa).

In terms of assembly, interacts with, relocalizes and stabilizes CYBA/p22phox. Interacts with TLR4. Interacts with protein disulfide isomerase. Interacts with PPP1R15A. Interacts with LRRC8A; this interaction prevents the ubiquitin-mediated degradation of LRRC8A. Heme is required as a cofactor. N-glycosylation is required for the function. EXpressed in brain, in all layers of the cerebellum, in pyramidal cells of the Ammon horn and in Purkinje cells (at protein level). Expressed in osteoclasts, leukocytes, kidney, liver and lung.

The protein resides in the cytoplasm. The protein localises to the endoplasmic reticulum membrane. It localises to the cell membrane. It is found in the cell junction. Its subcellular location is the focal adhesion. The protein resides in the nucleus. The enzyme catalyses NADPH + 2 O2 = 2 superoxide + NADP(+) + H(+). It carries out the reaction NADPH + O2 + H(+) = H2O2 + NADP(+). Its activity is regulated as follows. Activated by insulin. Inhibited by diphenylene iodonium. Inhibited by plumbagin. Activated by phorbol 12-myristate 13-acetate (PMA). Functionally, NADPH oxidase that catalyzes predominantly the reduction of oxygen to H2O2. Can also catalyze to a smaller extent, the reduction of oxygen to superoxide. May function as an oxygen sensor regulating the KCNK3/TASK-1 potassium channel and HIF1A activity. May regulate insulin signaling cascade. May play a role in apoptosis, bone resorption and lipolysaccharide-mediated activation of NFKB. May produce superoxide in the nucleus and play a role in regulating gene expression upon cell stimulation. Promotes ferroptosis, reactive oxygen species production and reduced glutathione (GSH) levels by activating NLRP3 inflammasome activation and cytokine release. The sequence is that of NADPH oxidase 4 (Nox4) from Mus musculus (Mouse).